Reading from the N-terminus, the 111-residue chain is Cytochrome bo(3) ubiquinol oxidase subunit 4 (111 aa).

Residues 1-17 lie on the Cytoplasmic side of the membrane; sequence MSSAAHDNHGAGHGSLG. A helical membrane pass occupies residues 18-38; sequence SYAIGFVLSVILTAIPFYMVM. Residues 39-46 are Periplasmic-facing; sequence DGGFSRHA. Residues 47–67 traverse the membrane as a helical segment; it reads TILTMVVLGLVQVVVHLICFL. Topologically, residues 68 to 80 are cytoplasmic; sequence HMNMSSEGRWNVM. A helical transmembrane segment spans residues 81–101; it reads AFIFTVIVILLVVGLSLWIIF. Topologically, residues 102–111 are periplasmic; that stretch reads SADMLMMPMP.

The protein belongs to the cytochrome c oxidase bacterial subunit 4 family. Heterooctamer of two A chains, two B chains, two C chains and two D chains.

The protein resides in the cell inner membrane. In terms of biological role, cytochrome bo(3) ubiquinol terminal oxidase is the component of the aerobic respiratory chain of E.coli that predominates when cells are grown at high aeration. Has proton pump activity across the membrane in addition to electron transfer, pumping 2 protons/electron. In Pseudomonas aeruginosa (strain ATCC 15692 / DSM 22644 / CIP 104116 / JCM 14847 / LMG 12228 / 1C / PRS 101 / PAO1), this protein is Cytochrome bo(3) ubiquinol oxidase subunit 4 (cyoD).